The sequence spans 168 residues: MVEDILAPGLRVVFCGINPGLSSAGTGFPFAHPANRFWKVIYQAGFTDHQLKPQEAQHLLDYRCGVTKLVDRPTVQANEISKQELHAGGRKLIEKIEDYQPQALAILGKQAYEQGFSQRGAQWGKQTLSIGSTQIWVLPNPSGLSRVSLEKLVEAYRELDQALVVRGR.

It belongs to the uracil-DNA glycosylase (UDG) superfamily. TDG/mug family. As to quaternary structure, binds DNA as a monomer.

The protein resides in the cytoplasm. The enzyme catalyses Specifically hydrolyzes mismatched double-stranded DNA and polynucleotides, releasing free uracil.. Its function is as follows. Excises ethenocytosine and uracil, which can arise by alkylation or deamination of cytosine, respectively, from the corresponding mispairs with guanine in ds-DNA. It is capable of hydrolyzing the carbon-nitrogen bond between the sugar-phosphate backbone of the DNA and the mispaired base. The complementary strand guanine functions in substrate recognition. Required for DNA damage lesion repair in stationary-phase cells. This Escherichia coli O157:H7 (strain EC4115 / EHEC) protein is G/U mismatch-specific DNA glycosylase.